A 588-amino-acid chain; its full sequence is Intracellular maltogenic amylase (588 aa).

Positions 149, 155, 174, and 176 each coordinate Ca(2+). 2 residues coordinate substrate: histidine 249 and arginine 325. Aspartate 327 acts as the Nucleophile in catalysis. Catalysis depends on glutamate 356, which acts as the Proton donor. Substrate contacts are provided by residues 422-423 (HD), aspartate 467, and arginine 471.

It belongs to the glycosyl hydrolase 13 family. BbmA subfamily. In terms of assembly, monomer or homodimer; in equilibrium. The cofactor is Ca(2+).

The protein resides in the cytoplasm. Hydrolyzes beta-cyclodextrin to maltose and glucose, soluble starch to maltose and glucose, and pullulan to panose with trace amounts of maltose and glucose. It is also able to hydrolyze acarbose. Can also exhibit a transglycosylation activity transferring glucose or maltose to another moiety of sugars by forming alpha-(1,6)- and alpha-(1,3)-glycosidic linkages upon the hydrolysis of substrate at concentrations of 5% or higher. In Bacillus subtilis, this protein is Intracellular maltogenic amylase (bbmA).